We begin with the raw amino-acid sequence, 86 residues long: Small ribosomal subunit protein bS16 (86 aa).

It belongs to the bacterial ribosomal protein bS16 family.

In Bordetella petrii (strain ATCC BAA-461 / DSM 12804 / CCUG 43448), this protein is Small ribosomal subunit protein bS16.